The sequence spans 82 residues: Turripeptide IX-23 (82 aa).

Positions M1–G23 are cleaved as a signal peptide. The propeptide occupies R24–P50. Cystine bridges form between C53-C68, C58-C72, and C64-C79.

It belongs to the Pg turripeptide superfamily. As to expression, expressed by the venom duct.

Its subcellular location is the secreted. The chain is Turripeptide IX-23 from Gemmula speciosa (Splendid gem-turris).